The following is a 544-amino-acid chain: Chaperonin GroEL (544 aa).

Residues 30 to 33 (TLGP), Lys51, 87 to 91 (DGTTT), Gly415, 479 to 481 (NAA), and Asp495 each bind ATP. The segment covering 525 to 537 (PQDTPATAAAPDM) has biased composition (low complexity). Residues 525–544 (PQDTPATAAAPDMGGMGGMM) form a disordered region.

The protein belongs to the chaperonin (HSP60) family. Forms a cylinder of 14 subunits composed of two heptameric rings stacked back-to-back. Interacts with the co-chaperonin GroES.

It is found in the cytoplasm. It catalyses the reaction ATP + H2O + a folded polypeptide = ADP + phosphate + an unfolded polypeptide.. Functionally, together with its co-chaperonin GroES, plays an essential role in assisting protein folding. The GroEL-GroES system forms a nano-cage that allows encapsulation of the non-native substrate proteins and provides a physical environment optimized to promote and accelerate protein folding. This chain is Chaperonin GroEL, found in Ruthia magnifica subsp. Calyptogena magnifica.